The chain runs to 1453 residues: ABC transporter G family member 34 (1453 aa).

The interval 1-24 is disordered; sequence MLGRDEDLVRTMSGRGSLGSTSHR. The ABC transporter 1 domain occupies 173-446; sequence LGLFHLLPSK…FEYMGFKCPE (274 aa). An ATP-binding site is contributed by 206 to 213; sequence GPPSSGKT. One can recognise an ABC transmembrane type-2 1 domain in the interval 524 to 737; it reads DLFKACFDRE…GQTALVINEF (214 aa). Transmembrane regions (helical) follow at residues 542 to 562, 582 to 602, 621 to 641, 661 to 681, 687 to 707, and 773 to 793; these read FVYV…MTVY, LFFS…FTVM, FALP…VIWI, LLAY…LGAL, IANS…GFII, and FWIC…CYII. The 254-residue stretch at 852 to 1105 folds into the ABC transporter 2 domain; it reads LAFNNVNYYV…LVEYFEAIEG (254 aa). Residue 897–904 participates in ATP binding; the sequence is GVSGAGKT. The ABC transmembrane type-2 2 domain maps to 1177–1391; sequence TQTKACFWKM…TLYGIITSQV (215 aa). The next 7 helical transmembrane spans lie at 1196–1216, 1230–1250, 1289–1309, 1311–1331, 1341–1361, 1366–1386, and 1422–1442; these read YNAI…LLFW, NFFG…AATV, IQTG…WTVV, FFWF…YGMM, IAGI…GFLI, IPIW…LYGI, and FLPV…FAFA.

The protein belongs to the ABC transporter superfamily. ABCG family. PDR (TC 3.A.1.205) subfamily. As to expression, expressed in roots at low levels.

It is found in the membrane. In terms of biological role, may be a general defense protein. This is ABC transporter G family member 34 (ABCG34) from Arabidopsis thaliana (Mouse-ear cress).